The following is a 599-amino-acid chain: Sulfite reductase [NADPH] flavoprotein alpha-component (599 aa).

Residues 64 to 202 (ITIISASQTG…AASEWRARVV (139 aa)) form the Flavodoxin-like domain. FMN-binding positions include 70–75 (SQTGNA), 117–120 (STQG), and 153–162 (LGDSSYEFFC). Residues 234–448 (DAPLVASLSV…IEHNDNFRLP (215 aa)) form the FAD-binding FR-type domain. Residues Thr-322, Ala-356, 386–389 (RLYS), 404–406 (TVG), Tyr-410, and 419–422 (GGAS) each bind FAD. NADP(+) contacts are provided by residues 519–520 (SR), 525–529 (KVYVQ), and Asp-561. Tyr-599 provides a ligand contact to FAD.

Belongs to the NADPH-dependent sulphite reductase flavoprotein subunit CysJ family. It in the N-terminal section; belongs to the flavodoxin family. The protein in the C-terminal section; belongs to the flavoprotein pyridine nucleotide cytochrome reductase family. Alpha(8)-beta(8). The alpha component is a flavoprotein, the beta component is a hemoprotein. FAD serves as cofactor. FMN is required as a cofactor.

The catalysed reaction is hydrogen sulfide + 3 NADP(+) + 3 H2O = sulfite + 3 NADPH + 4 H(+). Its pathway is sulfur metabolism; hydrogen sulfide biosynthesis; hydrogen sulfide from sulfite (NADPH route): step 1/1. Functionally, component of the sulfite reductase complex that catalyzes the 6-electron reduction of sulfite to sulfide. This is one of several activities required for the biosynthesis of L-cysteine from sulfate. The flavoprotein component catalyzes the electron flow from NADPH -&gt; FAD -&gt; FMN to the hemoprotein component. This is Sulfite reductase [NADPH] flavoprotein alpha-component from Escherichia coli (strain ATCC 8739 / DSM 1576 / NBRC 3972 / NCIMB 8545 / WDCM 00012 / Crooks).